Consider the following 158-residue polypeptide: Phosphopantetheine adenylyltransferase (158 aa).

Residue T10 coordinates substrate. ATP is bound by residues T10–F11 and H18. Positions 42, 74, and 88 each coordinate substrate. Residues G89–R91, E99, and N124–T130 each bind ATP.

Belongs to the bacterial CoaD family. As to quaternary structure, homohexamer. The cofactor is Mg(2+).

The protein resides in the cytoplasm. The catalysed reaction is (R)-4'-phosphopantetheine + ATP + H(+) = 3'-dephospho-CoA + diphosphate. It participates in cofactor biosynthesis; coenzyme A biosynthesis; CoA from (R)-pantothenate: step 4/5. Its function is as follows. Reversibly transfers an adenylyl group from ATP to 4'-phosphopantetheine, yielding dephospho-CoA (dPCoA) and pyrophosphate. This Shewanella woodyi (strain ATCC 51908 / MS32) protein is Phosphopantetheine adenylyltransferase.